Reading from the N-terminus, the 550-residue chain is U-box domain-containing protein 40 (550 aa).

Positions 19-29 (KSDNLSRRESL) are enriched in basic and acidic residues. Residues 19 to 55 (KSDNLSRRESLAGKSKWRTSLSRSSSSSSSNNNSPTK) form a disordered region. The span at 38-52 (SLSRSSSSSSSNNNS) shows a compositional bias: low complexity. Residues 57–127 (EIPAEFLCPI…HSWCERRCFP (71 aa)) form the U-box domain. ARM repeat units lie at residues 260-299 (ESSR…NLSL), 301-340 (KSNK…SLAL), 342-381 (DENK…HLSL), 383-420 (QSNR…NMAS), and 422-464 (PVSR…GLSH).

It catalyses the reaction S-ubiquitinyl-[E2 ubiquitin-conjugating enzyme]-L-cysteine + [acceptor protein]-L-lysine = [E2 ubiquitin-conjugating enzyme]-L-cysteine + N(6)-ubiquitinyl-[acceptor protein]-L-lysine.. It functions in the pathway protein modification; protein ubiquitination. In terms of biological role, functions as an E3 ubiquitin ligase. The chain is U-box domain-containing protein 40 (PUB40) from Arabidopsis thaliana (Mouse-ear cress).